The following is a 118-amino-acid chain: Vitelline membrane protein Vm32E (118 aa).

The N-terminal stretch at 1-17 (MKIVALTLVAFVALAGA) is a signal peptide. The VM domain occupies 36 to 75 (GYPAPPCPTNYLFSCQPNLAPAPCAQEAQAPAYGSAGAYT).

It belongs to the vitelline membrane family.

It localises to the secreted. Functionally, major early eggshell protein. In Drosophila mauritiana (Fruit fly), this protein is Vitelline membrane protein Vm32E.